A 182-amino-acid chain; its full sequence is MKNRLLFLGPPGAGKGTQASLICKDQGFLHLSTGDLLREEVSGGTDLGKKAELIMNKGELVSDEIVISIVEKRLIKYSEGWLLDGFPRNLAQASLLQNLLGRISQPIEIVLLIEIDDEILTERMLGRGRKDDNKAVIKNRLKIYKDQTSPLVDHYKKQGILKSINGCGSVEDVNSRIKEALS.

ATP is bound at residue 12-17 (GAGKGT). The tract at residues 32–61 (STGDLLREEVSGGTDLGKKAELIMNKGELV) is NMP. AMP-binding positions include Thr-33, Arg-38, 59–61 (ELV), 85–88 (GFPR), and Gln-92. The interval 126–132 (GRGRKDD) is LID. Position 127 (Arg-127) interacts with ATP. Residues Arg-129 and Arg-140 each contribute to the AMP site. Gly-168 provides a ligand contact to ATP.

It belongs to the adenylate kinase family. Monomer.

It localises to the cytoplasm. It catalyses the reaction AMP + ATP = 2 ADP. It functions in the pathway purine metabolism; AMP biosynthesis via salvage pathway; AMP from ADP: step 1/1. Its function is as follows. Catalyzes the reversible transfer of the terminal phosphate group between ATP and AMP. Plays an important role in cellular energy homeostasis and in adenine nucleotide metabolism. This Prochlorococcus marinus (strain SARG / CCMP1375 / SS120) protein is Adenylate kinase.